The primary structure comprises 871 residues: Valine--tRNA ligase (871 aa).

The short motif at 47–57 (PNVTGRLHIGH) is the 'HIGH' region element. A 'KMSKS' region motif is present at residues 534-538 (KMSKS). An ATP-binding site is contributed by Lys-537. A coiled-coil region spans residues 805 to 871 (DLTPILNRLN…IEEELARLTR (67 aa)).

Belongs to the class-I aminoacyl-tRNA synthetase family. ValS type 1 subfamily. As to quaternary structure, monomer.

The protein resides in the cytoplasm. The enzyme catalyses tRNA(Val) + L-valine + ATP = L-valyl-tRNA(Val) + AMP + diphosphate. Catalyzes the attachment of valine to tRNA(Val). As ValRS can inadvertently accommodate and process structurally similar amino acids such as threonine, to avoid such errors, it has a 'posttransfer' editing activity that hydrolyzes mischarged Thr-tRNA(Val) in a tRNA-dependent manner. This chain is Valine--tRNA ligase, found in Nitratiruptor sp. (strain SB155-2).